The chain runs to 636 residues: Chaperone protein DnaK (636 aa).

Position 203 is a phosphothreonine; by autocatalysis (Thr-203). The disordered stretch occupies residues 602–636 (VYGKQQEGAPAQEEPSAEGKKADDEGTVEGEFREV). Basic and acidic residues predominate over residues 618 to 636 (AEGKKADDEGTVEGEFREV).

Belongs to the heat shock protein 70 family.

In terms of biological role, acts as a chaperone. The sequence is that of Chaperone protein DnaK from Dehalococcoides mccartyi (strain CBDB1).